We begin with the raw amino-acid sequence, 866 residues long: N-alpha-acetyltransferase 15, NatA auxiliary subunit (866 aa).

4 TPR repeats span residues 46–79 (GETLAMKGLTLNCLGKKEEAYELVRRGLRNDLKS), 80–113 (HVCWHVYGLLQRSDKKYDEAIKCYRNALKWDKDN), 148–184 (RASWIGYAIAYHLLEDYEMAAKILEEFRKTQQTSPDK), and 224–257 (LAVEETKGELLLQLCRLEDAADVYRGLQERNPEN). At Lys-262 the chain carries N6-acetyllysine. A Phosphoserine modification is found at Ser-302. TPR repeat units follow at residues 374–407 (LWVQYYLAQHYDKIGQPSIALEYINTAIESTPTL), 409–441 (ELFLVKAKIYKHAGNIKEAARWMDEAQALDTAD), and 485–522 (MWFQTECAQAYKAMNKFGEALKKCYEIERHFIEITDDQ). The interaction with HYPK stretch occupies residues 500–866 (KFGEALKKCY…AEAEELANEI (367 aa)). 2 positions are modified to phosphoserine: Ser-537 and Ser-588. Residues 579 to 594 (EHEADTANMSDKELKK) are compositionally biased toward basic and acidic residues. A disordered region spans residues 579–642 (EHEADTANMS…EEIGGPKEEL (64 aa)). The span at 595 to 604 (LRNKQRRAQK) shows a compositional bias: basic residues. Residues 606 to 621 (AQIEEEKKNAEKEKQQ) are compositionally biased toward basic and acidic residues. The TPR 8 repeat unit spans residues 672–705 (IETHLFAFEIYFRKEKFLLMLQSVKRAFAIDSSH). N6-acetyllysine is present on residues Lys-735 and Lys-756. Residues Ser-855 and Ser-856 each carry the phosphoserine modification.

As to quaternary structure, component of the N-terminal acetyltransferase A (NatA) complex composed of NAA10 or probably NAA11 and NAA15. Interacts with XRCC6, NAA50 and XRCC5. Associates with HYPK when in a complex with NAA10. Interaction with HYPK reduces the capacity to interact with NAA50. Cleaved by caspases during apoptosis.

The protein resides in the cytoplasm. The protein localises to the nucleus. Its function is as follows. Auxillary subunit of the N-terminal acetyltransferase A (NatA) complex which displays alpha (N-terminal) acetyltransferase activity. The NAT activity may be important for vascular, hematopoietic and neuronal growth and development. Required to control retinal neovascularization in adult ocular endothelial cells. In complex with XRCC6 and XRCC5 (Ku80), up-regulates transcription from the osteocalcin promoter. The polypeptide is N-alpha-acetyltransferase 15, NatA auxiliary subunit (NAA15) (Pongo abelii (Sumatran orangutan)).